Reading from the N-terminus, the 180-residue chain is Adenine phosphoribosyltransferase (180 aa).

The residue at position 2 (S2) is an N-acetylserine. Phosphoserine occurs at positions 4, 15, and 30. Y60 carries the post-translational modification Phosphotyrosine. Residue S66 is modified to Phosphoserine. K114 bears the N6-acetyllysine mark. T135 carries the post-translational modification Phosphothreonine.

The protein belongs to the purine/pyrimidine phosphoribosyltransferase family. In terms of assembly, homodimer.

It is found in the cytoplasm. The catalysed reaction is AMP + diphosphate = 5-phospho-alpha-D-ribose 1-diphosphate + adenine. It functions in the pathway purine metabolism; AMP biosynthesis via salvage pathway; AMP from adenine: step 1/1. Catalyzes a salvage reaction resulting in the formation of AMP, that is energically less costly than de novo synthesis. In Rattus norvegicus (Rat), this protein is Adenine phosphoribosyltransferase.